A 228-amino-acid polypeptide reads, in one-letter code: 2-hydroxy-3-keto-5-methylthiopentenyl-1-phosphate phosphatase (228 aa).

Belongs to the HAD-like hydrolase superfamily. MtnX family.

The enzyme catalyses 2-hydroxy-5-methylsulfanyl-3-oxopent-1-enyl phosphate + H2O = 1,2-dihydroxy-5-(methylsulfanyl)pent-1-en-3-one + phosphate. The protein operates within amino-acid biosynthesis; L-methionine biosynthesis via salvage pathway; L-methionine from S-methyl-5-thio-alpha-D-ribose 1-phosphate: step 4/6. In terms of biological role, dephosphorylates 2-hydroxy-3-keto-5-methylthiopentenyl-1-phosphate (HK-MTPenyl-1-P) yielding 1,2-dihydroxy-3-keto-5-methylthiopentene (DHK-MTPene). This is 2-hydroxy-3-keto-5-methylthiopentenyl-1-phosphate phosphatase from Lysinibacillus sphaericus (strain C3-41).